Reading from the N-terminus, the 256-residue chain is Thioredoxin-dependent peroxide reductase, mitochondrial (256 aa).

The transit peptide at 1–61 (MAAAVGRLLR…KLFSTSSSYH (61 aa)) directs the protein to the mitochondrion. The region spanning 63 to 221 (PAVTQHAPYF…TLRLVKAFQY (159 aa)) is the Thioredoxin domain. An N6-succinyllysine modification is found at lysine 83. Residue lysine 91 is modified to N6-acetyllysine; alternate. Position 91 is an N6-succinyllysine; alternate (lysine 91). Cysteine 108 serves as the catalytic Cysteine sulfenic acid (-SOH) intermediate. At threonine 146 the chain carries Phosphothreonine.

This sequence belongs to the peroxiredoxin family. AhpC/Prx1 subfamily. As to quaternary structure, homodimer; disulfide-linked, upon oxidation. 6 homodimers assemble to form a ring-like dodecamer. Interacts with NEK6. Interacts with LRRK2. Interacts with MAP3K13. Interacts with RPS6KC1 (via PX domain). Post-translationally, phosphorylated by LRRK2; phosphorylation reduces perodixase activity. The enzyme can be inactivated by further oxidation of the cysteine sulfenic acid (C(P)-SOH) to sulphinic acid (C(P)-SO2H) and sulphonic acid (C(P)-SO3H) instead of its condensation to a disulfide bond. In terms of processing, S-palmitoylated.

The protein resides in the mitochondrion. Its subcellular location is the cytoplasm. The protein localises to the early endosome. The catalysed reaction is a hydroperoxide + [thioredoxin]-dithiol = an alcohol + [thioredoxin]-disulfide + H2O. In terms of biological role, thiol-specific peroxidase that catalyzes the reduction of hydrogen peroxide and organic hydroperoxides to water and alcohols, respectively. Plays a role in cell protection against oxidative stress by detoxifying peroxides. Acts synergistically with MAP3K13 to regulate the activation of NF-kappa-B in the cytosol. Required for the maintenance of physical strength. In Pongo abelii (Sumatran orangutan), this protein is Thioredoxin-dependent peroxide reductase, mitochondrial (PRDX3).